The following is a 114-amino-acid chain: T cell receptor beta variable 27 (114 aa).

A signal peptide spans 1–21 (MGPQLLGYVVLCLLGAGPLEA). The Ig-like domain maps to 22-114 (QVTQNPRYLI…TSLYFCASSL (93 aa)). Cys42 and Cys110 are joined by a disulfide. Asn103 carries N-linked (GlcNAc...) asparagine glycosylation.

Alpha-beta TR is a heterodimer composed of an alpha and beta chain; disulfide-linked. The alpha-beta TR is associated with the transmembrane signaling CD3 coreceptor proteins to form the TR-CD3 (TcR or TCR). The assembly of alpha-beta TR heterodimers with CD3 occurs in the endoplasmic reticulum where a single alpha-beta TR heterodimer associates with one CD3D-CD3E heterodimer, one CD3G-CD3E heterodimer and one CD247 homodimer forming a stable octameric structure. CD3D-CD3E and CD3G-CD3E heterodimers preferentially associate with TR alpha and TR beta chains, respectively. The association of the CD247 homodimer is the last step of TcR assembly in the endoplasmic reticulum and is required for transport to the cell surface.

Its subcellular location is the cell membrane. Its function is as follows. V region of the variable domain of T cell receptor (TR) beta chain that participates in the antigen recognition. Alpha-beta T cell receptors are antigen specific receptors which are essential to the immune response and are present on the cell surface of T lymphocytes. Recognize peptide-major histocompatibility (MH) (pMH) complexes that are displayed by antigen presenting cells (APC), a prerequisite for efficient T cell adaptive immunity against pathogens. Binding of alpha-beta TR to pMH complex initiates TR-CD3 clustering on the cell surface and intracellular activation of LCK that phosphorylates the ITAM motifs of CD3G, CD3D, CD3E and CD247 enabling the recruitment of ZAP70. In turn ZAP70 phosphorylates LAT, which recruits numerous signaling molecules to form the LAT signalosome. The LAT signalosome propagates signal branching to three major signaling pathways, the calcium, the mitogen-activated protein kinase (MAPK) kinase and the nuclear factor NF-kappa-B (NF-kB) pathways, leading to the mobilization of transcription factors that are critical for gene expression and essential for T cell growth and differentiation. The T cell repertoire is generated in the thymus, by V-(D)-J rearrangement. This repertoire is then shaped by intrathymic selection events to generate a peripheral T cell pool of self-MH restricted, non-autoaggressive T cells. Post-thymic interaction of alpha-beta TR with the pMH complexes shapes TR structural and functional avidity. This is T cell receptor beta variable 27 from Homo sapiens (Human).